The following is a 206-amino-acid chain: N-(5'-phosphoribosyl)anthranilate isomerase (206 aa).

It belongs to the TrpF family.

The enzyme catalyses N-(5-phospho-beta-D-ribosyl)anthranilate = 1-(2-carboxyphenylamino)-1-deoxy-D-ribulose 5-phosphate. Its pathway is amino-acid biosynthesis; L-tryptophan biosynthesis; L-tryptophan from chorismate: step 3/5. The polypeptide is N-(5'-phosphoribosyl)anthranilate isomerase (Azotobacter vinelandii (strain DJ / ATCC BAA-1303)).